The sequence spans 232 residues: Ubiquinone biosynthesis O-methyltransferase (232 aa).

S-adenosyl-L-methionine contacts are provided by R36, G55, D76, and M120.

Belongs to the methyltransferase superfamily. UbiG/COQ3 family.

The enzyme catalyses a 3-demethylubiquinol + S-adenosyl-L-methionine = a ubiquinol + S-adenosyl-L-homocysteine + H(+). It catalyses the reaction a 3-(all-trans-polyprenyl)benzene-1,2-diol + S-adenosyl-L-methionine = a 2-methoxy-6-(all-trans-polyprenyl)phenol + S-adenosyl-L-homocysteine + H(+). Its pathway is cofactor biosynthesis; ubiquinone biosynthesis. In terms of biological role, O-methyltransferase that catalyzes the 2 O-methylation steps in the ubiquinone biosynthetic pathway. The chain is Ubiquinone biosynthesis O-methyltransferase from Paraburkholderia xenovorans (strain LB400).